The sequence spans 248 residues: Isoprenyl transferase (248 aa).

Residue Asp-23 is part of the active site. Asp-23 is a Mg(2+) binding site. Substrate-binding positions include Gly-24 to Arg-27, Trp-28, Arg-36, His-40, and Ser-68 to Glu-70. Asn-71 (proton acceptor) is an active-site residue. Substrate is bound by residues Trp-72, Arg-74, Arg-185, and Arg-191–Ser-193. Glu-204 lines the Mg(2+) pocket.

Belongs to the UPP synthase family. Homodimer. The cofactor is Mg(2+).

Its function is as follows. Catalyzes the condensation of isopentenyl diphosphate (IPP) with allylic pyrophosphates generating different type of terpenoids. The chain is Isoprenyl transferase from Neisseria gonorrhoeae (strain ATCC 700825 / FA 1090).